The following is a 140-amino-acid chain: Ribonuclease P protein component (140 aa).

It belongs to the RnpA family. In terms of assembly, consists of a catalytic RNA component (M1 or rnpB) and a protein subunit.

The enzyme catalyses Endonucleolytic cleavage of RNA, removing 5'-extranucleotides from tRNA precursor.. Its function is as follows. RNaseP catalyzes the removal of the 5'-leader sequence from pre-tRNA to produce the mature 5'-terminus. It can also cleave other RNA substrates such as 4.5S RNA. The protein component plays an auxiliary but essential role in vivo by binding to the 5'-leader sequence and broadening the substrate specificity of the ribozyme. The chain is Ribonuclease P protein component from Nostoc sp. (strain PCC 7120 / SAG 25.82 / UTEX 2576).